We begin with the raw amino-acid sequence, 140 residues long: Small ribosomal subunit protein uS19 (140 aa).

Belongs to the universal ribosomal protein uS19 family.

Its function is as follows. Protein S19 forms a complex with S13 that binds strongly to the 16S ribosomal RNA. In Natronomonas pharaonis (strain ATCC 35678 / DSM 2160 / CIP 103997 / JCM 8858 / NBRC 14720 / NCIMB 2260 / Gabara) (Halobacterium pharaonis), this protein is Small ribosomal subunit protein uS19.